A 451-amino-acid chain; its full sequence is tRNA-2-methylthio-N(6)-dimethylallyladenosine synthase (451 aa).

One can recognise an MTTase N-terminal domain in the interval 5–121 (RQYHITTFGC…LQDLLEQVEG (117 aa)). [4Fe-4S] cluster is bound by residues C14, C50, C84, C156, C160, and C163. The Radical SAM core domain occupies 142-379 (RDSTVTAWVN…NHLVAQKAAE (238 aa)). A TRAM domain is found at 382–446 (QRYAGRIEEV…AFSLTGEAVE (65 aa)).

Belongs to the methylthiotransferase family. MiaB subfamily. As to quaternary structure, monomer. The cofactor is [4Fe-4S] cluster.

The protein resides in the cytoplasm. The enzyme catalyses N(6)-dimethylallyladenosine(37) in tRNA + (sulfur carrier)-SH + AH2 + 2 S-adenosyl-L-methionine = 2-methylsulfanyl-N(6)-dimethylallyladenosine(37) in tRNA + (sulfur carrier)-H + 5'-deoxyadenosine + L-methionine + A + S-adenosyl-L-homocysteine + 2 H(+). Its function is as follows. Catalyzes the methylthiolation of N6-(dimethylallyl)adenosine (i(6)A), leading to the formation of 2-methylthio-N6-(dimethylallyl)adenosine (ms(2)i(6)A) at position 37 in tRNAs that read codons beginning with uridine. The sequence is that of tRNA-2-methylthio-N(6)-dimethylallyladenosine synthase from Picosynechococcus sp. (strain ATCC 27264 / PCC 7002 / PR-6) (Agmenellum quadruplicatum).